A 444-amino-acid chain; its full sequence is Endoglucanase N (444 aa).

The N-terminal stretch at 1–31 (MWMRRNQIVRKLTLGVVTTVLGMSLSFSALS) is a signal peptide. Residues His64, 68-69 (WF), Tyr95, and His130 contribute to the substrate site. The Proton donor role is filled by Glu168. A substrate-binding site is contributed by Tyr230. The active-site Nucleophile is the Glu256. Substrate-binding positions include 262–263 (AS), Trp290, and 295–297 (KSE). The segment at 332-358 (ANLGGGDTPTTPTTPTEPTNPGNGTTG) is disordered. Low complexity predominate over residues 339 to 358 (TPTTPTTPTEPTNPGNGTTG). Positions 356–444 (TTGDVVLQYR…DKANRYVLVT (89 aa)) constitute a CBM3 domain.

It belongs to the glycosyl hydrolase 5 (cellulase A) family.

It is found in the secreted. It carries out the reaction Endohydrolysis of (1-&gt;4)-beta-D-glucosidic linkages in cellulose, lichenin and cereal beta-D-glucans.. The polypeptide is Endoglucanase N (celN) (Pectobacterium atrosepticum (Erwinia carotovora subsp. atroseptica)).